Here is a 424-residue protein sequence, read N- to C-terminus: Serine--tRNA ligase (424 aa).

An L-serine-binding site is contributed by 231–233; the sequence is TAE. 262–264 is an ATP binding site; it reads RSE. An L-serine-binding site is contributed by Glu-285. 349–352 contacts ATP; sequence EISS. Ser-385 provides a ligand contact to L-serine.

It belongs to the class-II aminoacyl-tRNA synthetase family. Type-1 seryl-tRNA synthetase subfamily. As to quaternary structure, homodimer. The tRNA molecule binds across the dimer.

It is found in the cytoplasm. The catalysed reaction is tRNA(Ser) + L-serine + ATP = L-seryl-tRNA(Ser) + AMP + diphosphate + H(+). The enzyme catalyses tRNA(Sec) + L-serine + ATP = L-seryl-tRNA(Sec) + AMP + diphosphate + H(+). The protein operates within aminoacyl-tRNA biosynthesis; selenocysteinyl-tRNA(Sec) biosynthesis; L-seryl-tRNA(Sec) from L-serine and tRNA(Sec): step 1/1. In terms of biological role, catalyzes the attachment of serine to tRNA(Ser). Is also able to aminoacylate tRNA(Sec) with serine, to form the misacylated tRNA L-seryl-tRNA(Sec), which will be further converted into selenocysteinyl-tRNA(Sec). The protein is Serine--tRNA ligase of Bacillus cytotoxicus (strain DSM 22905 / CIP 110041 / 391-98 / NVH 391-98).